The following is a 613-amino-acid chain: Kelch-like protein 21 (613 aa).

A BTB domain is found at Phe-38–His-105. The BACK domain occupies Cys-140–Glu-242. 6 Kelch repeats span residues Ile-289–Asn-337, Asp-338–Gly-384, Leu-386–Gly-424, Leu-426–Gly-472, Ile-474–Gly-514, and Arg-515–Arg-562.

As to quaternary structure, component of the BCR(KLHL21) E3 ubiquitin ligase complex, at least composed of cul3, klhl21 and rbx1.

The protein localises to the cytoplasm. It is found in the cytoskeleton. It localises to the spindle. It functions in the pathway protein modification; protein ubiquitination. Functionally, substrate-specific adapter of BCR (BTB-CUL3-RBX1) E3 ubiquitin-protein ligase complex required for efficient chromosome alignment and cytokinesis. The BCR(KLHL21) E3 ubiquitin ligase complex regulates localization of the chromosomal passenger complex (CPC) from chromosomes to the spindle midzone in anaphase and mediates the ubiquitination of AURKB. The protein is Kelch-like protein 21 (klhl21) of Danio rerio (Zebrafish).